Here is a 1203-residue protein sequence, read N- to C-terminus: Chromosome partition protein Smc (1203 aa).

32–39 (PNGSGKSN) contributes to the ATP binding site. Coiled-coil stretches lie at residues 167-203 (ILKY…RQLK), 250-288 (MMRR…SVQQ), and 327-497 (DVLE…LERK). Residues 511–622 (GLLGSIAKLV…VVNYLAEALG (112 aa)) enclose the SMC hinge domain. 3 coiled-coil regions span residues 657–689 (EVTS…ALSE), 720–765 (RLGQ…NVEQ), and 976–1030 (YDRA…RKDL).

Belongs to the SMC family. Homodimer.

The protein resides in the cytoplasm. Its function is as follows. Required for chromosome condensation and partitioning. This is Chromosome partition protein Smc from Mycobacterium leprae (strain TN).